Reading from the N-terminus, the 281-residue chain is Pantothenate synthetase (281 aa).

30–37 (MGALHRGH) is a binding site for ATP. Histidine 37 functions as the Proton donor in the catalytic mechanism. Glutamine 61 is a (R)-pantoate binding site. Residue glutamine 61 participates in beta-alanine binding. Position 147-150 (147-150 (GEKD)) interacts with ATP. Position 153 (glutamine 153) interacts with (R)-pantoate. ATP is bound by residues isoleucine 176 and 184 to 187 (LSSR).

It belongs to the pantothenate synthetase family. As to quaternary structure, homodimer.

It is found in the cytoplasm. The enzyme catalyses (R)-pantoate + beta-alanine + ATP = (R)-pantothenate + AMP + diphosphate + H(+). The protein operates within cofactor biosynthesis; (R)-pantothenate biosynthesis; (R)-pantothenate from (R)-pantoate and beta-alanine: step 1/1. Functionally, catalyzes the condensation of pantoate with beta-alanine in an ATP-dependent reaction via a pantoyl-adenylate intermediate. The chain is Pantothenate synthetase from Porphyromonas gingivalis (strain ATCC BAA-308 / W83).